Consider the following 134-residue polypeptide: Small ribosomal subunit protein uS8 (134 aa).

This sequence belongs to the universal ribosomal protein uS8 family. In terms of assembly, part of the 30S ribosomal subunit. Contacts proteins S5 and S12.

Functionally, one of the primary rRNA binding proteins, it binds directly to 16S rRNA central domain where it helps coordinate assembly of the platform of the 30S subunit. The chain is Small ribosomal subunit protein uS8 from Thermosipho africanus (strain TCF52B).